The primary structure comprises 417 residues: Interferon regulatory factor 3 (417 aa).

T3 carries the post-translational modification Phosphothreonine. Residues 5-111 constitute a DNA-binding region (IRF tryptophan pentad repeat); the sequence is KPRILPWLIS…DPHKIYEFVN (107 aa). A Phosphoserine modification is found at S14. Phosphothreonine is present on T75. 2 positions are modified to phosphoserine: S97 and S123. 2 disordered regions span residues 111 to 134 and 147 to 170; these read NSGV…TSDT and DLSP…LQSP. The segment at 140-417 is mediates interaction with ZDHHC11; the sequence is EKLLSDMDLS…LQDLAEDMDF (278 aa). S184 is subject to Phosphoserine. A Glycyl lysine isopeptide (Lys-Gly) (interchain with G-Cter in ISG15) cross-link involves residue K189. The interaction with HERC5 stretch occupies residues 196-356; it reads EDWEFEVTAF…SWPQDQPWIK (161 aa). A Phosphothreonine modification is found at T249. A disulfide bridge links C263 with C285. Glycyl lysine isopeptide (Lys-Gly) (interchain with G-Cter in ISG15) cross-links involve residues K356 and K362. An N6-acetyllysine modification is found at K362. S381 carries the post-translational modification Phosphoserine. The residue at position 382 (S382) is a Diphosphoserine. The residue at position 382 (S382) is a Phosphoserine; by TBK1. S392 is subject to Phosphoserine; by IKKE. The residue at position 394 (S394) is a Phosphoserine. At T400 the chain carries Phosphothreonine.

Belongs to the IRF family. As to quaternary structure, monomer. Homodimer; phosphorylation-induced. Interacts (when phosphorylated) with CREBBP. Interacts with MAVS (via phosphorylated pLxIS motif). Interacts with TICAM1 (via phosphorylated pLxIS motif). Interacts with STING1 (via phosphorylated pLxIS motif). Interacts with IKBKE and TBK1. Interacts with TICAM2. Interacts with RBCK1. Interacts with HERC5. Interacts with DDX3X; the interaction allows the phosphorylation and activation of IRF3 by IKBKE. Interacts with TRIM21 and ULK1, in the presence of TRIM21; this interaction leads to IRF3 degradation by autophagy. Interacts with RIOK3; RIOK3 probably mediates the interaction of TBK1 with IRF3. Interacts with ILRUN; the interaction inhibits IRF3 binding to its DNA consensus sequence. Interacts with LYAR; this interaction impairs IRF3 DNA-binding activity. Interacts with TRAF3. Interacts with ZDHHC11; ZDHHC11 recruits IRF3 to STING1 upon DNA virus infection and thereby promotes IRF3 activation. Interacts with HSP90AA1; the interaction mediates IRF3 association with TOMM70. Interacts with BCL2; the interaction decreases upon Sendai virus infection. Interacts with BAX; the interaction is direct, increases upon virus infection and mediates the formation of the apoptosis complex TOMM70:HSP90AA1:IRF3:BAX. Interacts with DDX56. Interacts with NBR1. In terms of processing, constitutively phosphorylated on many Ser/Thr residues. Activated following phosphorylation by TBK1 and IKBKE. Innate adapter proteins, such as MAVS, STING1 or TICAM1, are first activated by viral RNA, cytosolic DNA, and bacterial lipopolysaccharide (LPS), respectively, leading to activation of the kinases TBK1 and IKBKE. These kinases then phosphorylate the adapter proteins on the pLxIS motif, leading to recruitment of IRF3, thereby licensing IRF3 for phosphorylation by TBK1. Phosphorylation at Ser-382 is followed by pyrophosphorylation at the same residue, promoting phosphorylation at Ser-392. Phosphorylated IRF3 dissociates from the adapter proteins, dimerizes, and then enters the nucleus to induce IFNs. Pyrophosphorylated by UAP1 following phosphorylation at Ser-382 by TBK1. Pyrophosphorylation promotes subsequent phosphorylation at Ser-392, leading to homodimerization of IRF3. Post-translationally, acetylation at Lys-362 by KAT8 inhibits recruimtent to promoters and transcription factor activity. Acetylation by KAT8 is promoted by phosphorylation at Ser-392. In terms of processing, ubiquitinated; ubiquitination involves RBCK1 leading to proteasomal degradation. Polyubiquitinated; ubiquitination involves TRIM21 leading to proteasomal degradation. Ubiquitinated by UBE3C, leading to its degradation. Deubiquitinated by USP5 on both 'Lys-48'-linked unanchored and 'Lys-63'-linked anchored polyubiquitin, leading to inhibition of anti-RNA viral innate immunity. ISGylated by HERC5 resulting in sustained IRF3 activation and in the inhibition of IRF3 ubiquitination by disrupting PIN1 binding. The phosphorylation state of IRF3 does not alter ISGylation. Post-translationally, proteolytically cleaved by apoptotic caspases during apoptosis, leading to its inactivation. Cleavage by CASP3 during virus-induced apoptosis inactivates it, preventing cytokine overproduction.

The protein localises to the cytoplasm. Its subcellular location is the nucleus. It localises to the mitochondrion. Its activity is regulated as follows. In the absence of viral infection, maintained as a monomer in an autoinhibited state. Phosphorylation by TBK1 and IKBKE disrupts this autoinhibition leading to the liberation of the DNA-binding and dimerization activities and its nuclear localization where it can activate type I IFN and ISG genes. Phosphorylation and activation follow the following steps: innate adapter proteins, such as MAVS, STING1 or TICAM1, are first activated by viral RNA, cytosolic DNA and bacterial lipopolysaccharide (LPS), respectively, leading to activation of the kinases TBK1 and IKBKE. These kinases then phosphorylate the adapter proteins on their pLxIS motif, leading to recruitment of IRF3, thereby licensing IRF3 for phosphorylation by TBK1. Phosphorylated IRF3 dissociates from the adapter proteins, dimerizes, and then enters the nucleus to induce IFNs. Functionally, key transcriptional regulator of type I interferon (IFN)-dependent immune responses which plays a critical role in the innate immune response against DNA and RNA viruses. Regulates the transcription of type I IFN genes (IFN-alpha and IFN-beta) and IFN-stimulated genes (ISG) by binding to an interferon-stimulated response element (ISRE) in their promoters. Acts as a more potent activator of the IFN-beta (IFNB) gene than the IFN-alpha (IFNA) gene and plays a critical role in both the early and late phases of the IFNA/B gene induction. Found in an inactive form in the cytoplasm of uninfected cells and following viral infection, double-stranded RNA (dsRNA), or toll-like receptor (TLR) signaling, is phosphorylated by IKBKE and TBK1 kinases. This induces a conformational change, leading to its dimerization and nuclear localization and association with CREB binding protein (CREBBP) to form dsRNA-activated factor 1 (DRAF1), a complex which activates the transcription of the type I IFN and ISG genes. Can activate distinct gene expression programs in macrophages and can induce significant apoptosis in primary macrophages. The protein is Interferon regulatory factor 3 (IRF3) of Bos taurus (Bovine).